We begin with the raw amino-acid sequence, 268 residues long: Tryptophan synthase alpha chain (268 aa).

Residues E40 and D51 each act as proton acceptor in the active site.

The protein belongs to the TrpA family. Tetramer of two alpha and two beta chains.

The catalysed reaction is (1S,2R)-1-C-(indol-3-yl)glycerol 3-phosphate + L-serine = D-glyceraldehyde 3-phosphate + L-tryptophan + H2O. Its pathway is amino-acid biosynthesis; L-tryptophan biosynthesis; L-tryptophan from chorismate: step 5/5. Its function is as follows. The alpha subunit is responsible for the aldol cleavage of indoleglycerol phosphate to indole and glyceraldehyde 3-phosphate. In Geobacillus thermodenitrificans (strain NG80-2), this protein is Tryptophan synthase alpha chain.